We begin with the raw amino-acid sequence, 383 residues long: 3-phytase (383 aa).

Residues 1-26 form the signal peptide; that stretch reads MNHSKTLLLTAAAGLMLTCGAVSSQA. The propeptide occupies 27 to 29; the sequence is KHK. One can recognise a BPP domain in the interval 30–362; it reads LSDPYHFTVN…VPWERIADQI (333 aa).

Requires Ca(2+) as cofactor.

It localises to the secreted. The catalysed reaction is 1D-myo-inositol hexakisphosphate + H2O = 1D-myo-inositol 1,2,4,5,6-pentakisphosphate + phosphate. Its function is as follows. Catalyzes the hydrolysis of inorganic orthophosphate from phytate. Only phytate, ADP, and ATP were hydrolyzed (100, 75, and 50% of the relative activity, respectively). This is 3-phytase (phyC) from Bacillus subtilis.